The following is a 113-amino-acid chain: UPF0145 protein SynWH7803_1684 (113 aa).

The protein belongs to the UPF0145 family.

The protein is UPF0145 protein SynWH7803_1684 of Synechococcus sp. (strain WH7803).